Consider the following 264-residue polypeptide: MSCIIKTESEIKKMRISGKLAAEVLEMIKEHLQPKISTEDINQICHDYIVYKKKAISACLGYHGFPKSICISINDVVCHGIPSKNQVFKEGDIVNIDIAIIKDGYHGDTSKMFYIGKTSILSKRLCQVARESLYLSLKLVKPGIPLYKIGEIIQNYVESNNFSVVKEYCGHGIGRNFHEEPHVLHYKNKKNNIILKKGMIFTIEPMINSGNPEVKCMKDGWTVKTKDRSLSAQYEHTVLVTEYGCDILTWQKDEDISQKLVNIN.

His79 is a substrate binding site. A divalent metal cation contacts are provided by Asp97, Asp108, and His171. A substrate-binding site is contributed by His178. 2 residues coordinate a divalent metal cation: Glu204 and Glu235.

This sequence belongs to the peptidase M24A family. Methionine aminopeptidase type 1 subfamily. As to quaternary structure, monomer. Co(2+) is required as a cofactor. The cofactor is Zn(2+). It depends on Mn(2+) as a cofactor. Fe(2+) serves as cofactor.

The catalysed reaction is Release of N-terminal amino acids, preferentially methionine, from peptides and arylamides.. In terms of biological role, removes the N-terminal methionine from nascent proteins. The N-terminal methionine is often cleaved when the second residue in the primary sequence is small and uncharged (Met-Ala-, Cys, Gly, Pro, Ser, Thr, or Val). Requires deformylation of the N(alpha)-formylated initiator methionine before it can be hydrolyzed. The polypeptide is Methionine aminopeptidase (Buchnera aphidicola subsp. Acyrthosiphon pisum (strain APS) (Acyrthosiphon pisum symbiotic bacterium)).